We begin with the raw amino-acid sequence, 607 residues long: Isocitrate dehydrogenase kinase/phosphatase (607 aa).

ATP-binding positions include Ala328 to Leu334 and Lys349. Asp384 is a catalytic residue.

The protein belongs to the AceK family.

Its subcellular location is the cytoplasm. The enzyme catalyses L-seryl-[isocitrate dehydrogenase] + ATP = O-phospho-L-seryl-[isocitrate dehydrogenase] + ADP + H(+). In terms of biological role, bifunctional enzyme which can phosphorylate or dephosphorylate isocitrate dehydrogenase (IDH) on a specific serine residue. This is a regulatory mechanism which enables bacteria to bypass the Krebs cycle via the glyoxylate shunt in response to the source of carbon. When bacteria are grown on glucose, IDH is fully active and unphosphorylated, but when grown on acetate or ethanol, the activity of IDH declines drastically concomitant with its phosphorylation. This is Isocitrate dehydrogenase kinase/phosphatase from Cupriavidus metallidurans (strain ATCC 43123 / DSM 2839 / NBRC 102507 / CH34) (Ralstonia metallidurans).